The primary structure comprises 375 residues: 1-deoxy-D-xylulose 5-phosphate reductoisomerase (375 aa).

NADPH-binding residues include Thr12, Gly13, Ser14, Ile15, Asn39, and Asn115. A 1-deoxy-D-xylulose 5-phosphate-binding site is contributed by Lys116. Glu117 lines the NADPH pocket. Asp141 provides a ligand contact to Mn(2+). Residues Ser142, Glu143, Ser163, and His186 each coordinate 1-deoxy-D-xylulose 5-phosphate. A Mn(2+)-binding site is contributed by Glu143. An NADPH-binding site is contributed by Gly192. Residues Ser199, Asn204, Lys205, and Glu208 each coordinate 1-deoxy-D-xylulose 5-phosphate. Glu208 contacts Mn(2+).

This sequence belongs to the DXR family. Mg(2+) is required as a cofactor. Requires Mn(2+) as cofactor.

The enzyme catalyses 2-C-methyl-D-erythritol 4-phosphate + NADP(+) = 1-deoxy-D-xylulose 5-phosphate + NADPH + H(+). Its pathway is isoprenoid biosynthesis; isopentenyl diphosphate biosynthesis via DXP pathway; isopentenyl diphosphate from 1-deoxy-D-xylulose 5-phosphate: step 1/6. Functionally, catalyzes the NADPH-dependent rearrangement and reduction of 1-deoxy-D-xylulose-5-phosphate (DXP) to 2-C-methyl-D-erythritol 4-phosphate (MEP). The sequence is that of 1-deoxy-D-xylulose 5-phosphate reductoisomerase from Thermotoga neapolitana (strain ATCC 49049 / DSM 4359 / NBRC 107923 / NS-E).